The primary structure comprises 429 residues: Adenylosuccinate synthetase (429 aa).

GTP contacts are provided by residues Gly12–Lys18 and Gly40–Thr42. Asp13 functions as the Proton acceptor in the catalytic mechanism. Asp13 and Gly40 together coordinate Mg(2+). Residues Asp13–Lys16, Asn38–His41, Thr128, Arg142, Gln223, Thr238, and Arg302 contribute to the IMP site. His41 serves as the catalytic Proton donor. Thr298–Arg304 lines the substrate pocket. GTP is bound by residues Arg304, Cys330–Asp332, and Ser412–Gly414.

The protein belongs to the adenylosuccinate synthetase family. As to quaternary structure, homodimer. Requires Mg(2+) as cofactor.

Its subcellular location is the cytoplasm. The enzyme catalyses IMP + L-aspartate + GTP = N(6)-(1,2-dicarboxyethyl)-AMP + GDP + phosphate + 2 H(+). Its pathway is purine metabolism; AMP biosynthesis via de novo pathway; AMP from IMP: step 1/2. Functionally, plays an important role in the de novo pathway of purine nucleotide biosynthesis. Catalyzes the first committed step in the biosynthesis of AMP from IMP. In Streptococcus mutans serotype c (strain ATCC 700610 / UA159), this protein is Adenylosuccinate synthetase.